Here is a 130-residue protein sequence, read N- to C-terminus: Small ribosomal subunit protein uS9 (130 aa).

A disordered region spans residues arginine 109 to arginine 130. Over residues lysine 111–arginine 130 the composition is skewed to basic residues.

The protein belongs to the universal ribosomal protein uS9 family.

This Mycoplasma mobile (strain ATCC 43663 / 163K / NCTC 11711) (Mesomycoplasma mobile) protein is Small ribosomal subunit protein uS9.